The primary structure comprises 399 residues: Bifunctional enzyme IspD/IspF (399 aa).

The segment at 1 to 235 (METWALILAA…MVEQPKTTVP (235 aa)) is 2-C-methyl-D-erythritol 4-phosphate cytidylyltransferase. The 2-C-methyl-D-erythritol 2,4-cyclodiphosphate synthase stretch occupies residues 236–399 (IVGYGYDVHK…IVIVTAIRIS (164 aa)). 2 residues coordinate a divalent metal cation: D242 and H244. Residues 242–244 (DVH) and 275–276 (HS) each bind 4-CDP-2-C-methyl-D-erythritol 2-phosphate. An a divalent metal cation-binding site is contributed by H283. 4-CDP-2-C-methyl-D-erythritol 2-phosphate is bound by residues 297–299 (DIG), 302–306 (FPDSD), 373–376 (TTEE), and F380.

The protein in the N-terminal section; belongs to the IspD/TarI cytidylyltransferase family. IspD subfamily. In the C-terminal section; belongs to the IspF family. The cofactor is a divalent metal cation.

It carries out the reaction 2-C-methyl-D-erythritol 4-phosphate + CTP + H(+) = 4-CDP-2-C-methyl-D-erythritol + diphosphate. The catalysed reaction is 4-CDP-2-C-methyl-D-erythritol 2-phosphate = 2-C-methyl-D-erythritol 2,4-cyclic diphosphate + CMP. It functions in the pathway isoprenoid biosynthesis; isopentenyl diphosphate biosynthesis via DXP pathway; isopentenyl diphosphate from 1-deoxy-D-xylulose 5-phosphate: step 2/6. The protein operates within isoprenoid biosynthesis; isopentenyl diphosphate biosynthesis via DXP pathway; isopentenyl diphosphate from 1-deoxy-D-xylulose 5-phosphate: step 4/6. Functionally, bifunctional enzyme that catalyzes the formation of 4-diphosphocytidyl-2-C-methyl-D-erythritol from CTP and 2-C-methyl-D-erythritol 4-phosphate (MEP) (IspD), and catalyzes the conversion of 4-diphosphocytidyl-2-C-methyl-D-erythritol 2-phosphate (CDP-ME2P) to 2-C-methyl-D-erythritol 2,4-cyclodiphosphate (ME-CPP) with a corresponding release of cytidine 5-monophosphate (CMP) (IspF). This chain is Bifunctional enzyme IspD/IspF, found in Lawsonia intracellularis (strain PHE/MN1-00).